Reading from the N-terminus, the 363-residue chain is MKKSINEIADFLGGKVVGDGGILIKAVRGIDEAGPGDITFVANPQYEKKLNETGASAVLVTRDTERPGENVTLIQVDDPYVSLGKLLTIFYPEEREKPGISAQAIVEEGAEISPSATVYPGVYISSGAGIGAGVVLYPGVFVGRDAVIGENSILYPNVCVYRRCLIGKRVILHAGAVVGSDGFGFANPGRDNIKIPQIGIVQIDDDVEIGANTTIDRATLGRTWIQRGVKIDNLVQIAHNVVIGEKSIIVSQVGISGSTRLGRSVILGGQAGLVGHLQIGDFAMVGAQSGVHEDVPANSVVSGSPCQPHRNWLRSMSCLPRLPDMRHLLNDLRKRIETLEKLSEMKKEVEKEKESSREKEETK.

The active-site Proton acceptor is the H239. A disordered region spans residues 342 to 363 (LSEMKKEVEKEKESSREKEETK).

Belongs to the transferase hexapeptide repeat family. LpxD subfamily. Homotrimer.

The enzyme catalyses a UDP-3-O-[(3R)-3-hydroxyacyl]-alpha-D-glucosamine + a (3R)-hydroxyacyl-[ACP] = a UDP-2-N,3-O-bis[(3R)-3-hydroxyacyl]-alpha-D-glucosamine + holo-[ACP] + H(+). The protein operates within bacterial outer membrane biogenesis; LPS lipid A biosynthesis. Catalyzes the N-acylation of UDP-3-O-acylglucosamine using 3-hydroxyacyl-ACP as the acyl donor. Is involved in the biosynthesis of lipid A, a phosphorylated glycolipid that anchors the lipopolysaccharide to the outer membrane of the cell. The polypeptide is UDP-3-O-acylglucosamine N-acyltransferase (Syntrophus aciditrophicus (strain SB)).